A 236-amino-acid chain; its full sequence is Small ribosomal subunit protein uS2c (236 aa).

Belongs to the universal ribosomal protein uS2 family.

It is found in the plastid. The protein resides in the chloroplast. The polypeptide is Small ribosomal subunit protein uS2c (rps2) (Chaetosphaeridium globosum (Charophycean green alga)).